The chain runs to 389 residues: Na(+)/H(+) antiporter NhaA (389 aa).

The next 11 membrane-spanning stretches (helical) occupy residues 14–34 (AGGILLLVAVVFAMLMANSPL), 59–79 (LLLWINDGLMALFFLLIGLEV), 95–115 (SLPSFAAIGGMLVPAGIYLLF), 124–144 (AGWAIPAATDIAFALGIMALL), 154–174 (VFLLALAIIDDLGVIVIIALF), 177–197 (SDLSTISLAIASVAILGLVGL), 213–233 (LILWVAVLKSGVHATLAGVII), 261–281 (FLILPVFAFANAGVALGNMSL), 290–310 (IGIALGLILGKPIGVMLFSFI), 328–348 (IAPVAAMCGIGFTMSMFIASL), and 363–383 (LGTLIGSFIAALVGYFWLSKV).

Belongs to the NhaA Na(+)/H(+) (TC 2.A.33) antiporter family.

Its subcellular location is the cell inner membrane. The enzyme catalyses Na(+)(in) + 2 H(+)(out) = Na(+)(out) + 2 H(+)(in). In terms of biological role, na(+)/H(+) antiporter that extrudes sodium in exchange for external protons. The sequence is that of Na(+)/H(+) antiporter NhaA from Shewanella sp. (strain W3-18-1).